We begin with the raw amino-acid sequence, 391 residues long: Casein kinase II subunit alpha (391 aa).

Positions 36-41 (QDDYQL) are interaction with beta subunit. The Protein kinase domain maps to 39-324 (YQLVRKLGRG…AREAMEHPYF (286 aa)). Residues 45 to 53 (LGRGKYSEV) and Lys-68 contribute to the ATP site. Asp-156 functions as the Proton acceptor in the catalytic mechanism. 2 positions are modified to phosphothreonine; by CDK1: Thr-344 and Thr-360. 2 positions are modified to phosphoserine; by CDK1: Ser-362 and Ser-370.

It belongs to the protein kinase superfamily. Ser/Thr protein kinase family. CK2 subfamily. As to quaternary structure, heterotetramer composed of two catalytic subunits (alpha chain and/or alpha' chain) and two regulatory subunits (beta chains). The tetramer can exist as a combination of 2 alpha/2 beta, 2 alpha'/2 beta or 1 alpha/1 alpha'/2 beta subunits. Also part of a CK2-SPT16-SSRP1 complex composed of SSRP1, SUPT16H, CSNK2A1, CSNK2A2 and CSNK2B, which forms following UV irradiation. Interacts with RNPS1. Interacts with SNAI1. Interacts with PML. Interacts with CCAR2. Interacts with HIRIP3. Phosphorylated at Thr-344, Thr-360, Ser-362 and Ser-370 by CDK1 in prophase and metaphase and dephosphorylated during anaphase. Phosphorylation does not directly affect casein kinase 2 activity, but may contribute to its regulation by forming binding sites for interacting proteins and/or targeting it to different compartments.

The protein resides in the nucleus. The catalysed reaction is L-seryl-[protein] + ATP = O-phospho-L-seryl-[protein] + ADP + H(+). It catalyses the reaction L-threonyl-[protein] + ATP = O-phospho-L-threonyl-[protein] + ADP + H(+). Its activity is regulated as follows. Constitutively active protein kinase whose activity is not directly affected by phosphorylation. Seems to be regulated by level of expression and localization. Catalytic subunit of a constitutively active serine/threonine-protein kinase complex that phosphorylates a large number of substrates containing acidic residues C-terminal to the phosphorylated serine or threonine. Regulates numerous cellular processes, such as cell cycle progression, apoptosis and transcription, as well as viral infection. May act as a regulatory node which integrates and coordinates numerous signals leading to an appropriate cellular response. During mitosis, functions as a component of the p53/TP53-dependent spindle assembly checkpoint (SAC) that maintains cyclin-B-CDK1 activity and G2 arrest in response to spindle damage. Also required for p53/TP53-mediated apoptosis, phosphorylating 'Ser-392' of p53/TP53 following UV irradiation. Phosphorylates a number of DNA repair proteins in response to DNA damage, such as MDC1, MRE11, RAD9A, RAD51 and HTATSF1, promoting their recruitment to DNA damage sites. Can also negatively regulate apoptosis. Phosphorylates the caspases CASP9 and CASP2 and the apoptotic regulator NOL3. Phosphorylation protects CASP9 from cleavage and activation by CASP8, and inhibits the dimerization of CASP2 and activation of CASP8. Phosphorylates YY1, protecting YY1 from cleavage by CASP7 during apoptosis. Regulates transcription by direct phosphorylation of RNA polymerases I, II, III and IV. Also phosphorylates and regulates numerous transcription factors including NF-kappa-B, STAT1, CREB1, IRF1, IRF2, ATF1, ATF4, SRF, MAX, JUN, FOS, MYC and MYB. Phosphorylates Hsp90 and its co-chaperones FKBP4 and CDC37, which is essential for chaperone function. Mediates sequential phosphorylation of FNIP1, promoting its gradual interaction with Hsp90, leading to activate both kinase and non-kinase client proteins of Hsp90. Regulates Wnt signaling by phosphorylating CTNNB1 and the transcription factor LEF1. Acts as an ectokinase that phosphorylates several extracellular proteins. Phosphorylates PML at 'Ser-565' and primes it for ubiquitin-mediated degradation. Plays an important role in the circadian clock function by phosphorylating BMAL1 at 'Ser-90' which is pivotal for its interaction with CLOCK and which controls CLOCK nuclear entry. Phosphorylates FMR1, promoting FMR1-dependent formation of a membraneless compartment. May phosphorylate histone H2A on 'Ser-1'. The chain is Casein kinase II subunit alpha (Csnk2a1) from Rattus norvegicus (Rat).